A 590-amino-acid chain; its full sequence is AT-rich interactive domain-containing protein 5A (590 aa).

The tract at residues 1-52 (MAAPPAKGNTEQSEEGDLPQLPVSPKPDDEQSRSQSPTQLQDSPEAGGEQEE) is disordered. Residues 1–294 (MAAPPAKGNT…NKDIQDSPQN (294 aa)) are interaction with SOX9. Position 24 is a phosphoserine (Ser-24). Over residues 33–42 (RSQSPTQLQD) the composition is skewed to polar residues. Positions 50–142 (QEEEQAFLVS…LVLPYVRHLK (93 aa)) constitute an ARID domain. Glycyl lysine isopeptide (Lys-Gly) (interchain with G-Cter in ubiquitin) cross-links involve residues Lys-80 and Lys-89. The tract at residues 141–229 (LKGEDDKPLP…SGPSPPLTGA (89 aa)) is disordered. Positions 160-186 (MAKELRGDDGTTEKLKKAKDSEERRVE) are enriched in basic and acidic residues. Residues 187–210 (QTTPGKTKSDATGQTQLPCQGSSR) are compositionally biased toward polar residues. Phosphoserine is present on residues Ser-253 and Ser-283. 3 disordered regions span residues 275–323 (EGCR…RMEA), 367–402 (GPPG…TRKR), and 419–443 (VPTE…RGLE). Positions 367-381 (GPPGKEEGPTTKESH) are enriched in basic and acidic residues. 2 positions are modified to phosphoserine: Ser-433 and Ser-458.

As to quaternary structure, interacts with SOX9. Interacts with ESR1. Interacts with RORC. Phosphorylated by MAPK14 on serine residues involving a TLR4 signaling pathway upon lipopolysaccharide (LPS) stimulation leading to its ubiquitination and proteasomal degradation. In terms of processing, ubiquitinated leading to proteasomal degradation; involving WWP1 linked to MAPK14-mediated phosphorylation upon LPS stimulation. In terms of tissue distribution, expressed in T cells (at protein level). Expressed at high levels in cartilage, heart, testis and bone.

It localises to the nucleus. DNA-binding protein that may regulate transcription and act as a repressor by binding to AT-rich stretches in the promoter region of target genes. May positively regulate chondrocyte-specific transcription such as of COL2A1 in collaboration with SOX9 and positively regulate histone H3 acetylation at chondrocyte-specific genes. May stimulate early-stage chondrocyte differentiation and inhibit later stage differention. Can repress ESR1-mediated transcriptional activation; proposed to act as corepressor for selective nuclear hormone receptors. As an RNA-binding protein, involved in the regulation of inflammatory response by stabilizing selective inflammation-related mRNAs, such as STAT3 and TBX21. Also stabilizes IL6 mRNA. Binds to stem loop structures located in the 3'UTRs of IL6, STAT3 and TBX21 mRNAs; at least for STAT3 prevents binding of ZC3H12A to the mRNA stem loop structure thus inhibiting its degradation activity. Contributes to elevated IL6 levels possibly implicated in autoimmunity processes. IL6-dependent stabilization of STAT3 mRNA may promote differentiation of naive CD4+ T-cells into T-helper Th17 cells. In CD4+ T-cells may also inhibit RORC-induced Th17 cell differentiation independently of IL6 signaling. Stabilization of TBX21 mRNA contributes to elevated interferon-gamma secretion in Th1 cells possibly implicated in the establishment of septic shock. Stabilizes TNFRSF4/OX40 mRNA by binding to the conserved stem loop structure in its 3'UTR; thereby competing with the mRNA-destabilizing functions of RC3H1 and endoribonuclease ZC3H12A. In Mus musculus (Mouse), this protein is AT-rich interactive domain-containing protein 5A (Arid5a).